An 81-amino-acid chain; its full sequence is Cortexin-2 (81 aa).

A helical transmembrane segment spans residues 29-49 (TGFAFVGILCIFLGLLIIRCF).

The protein belongs to the cortexin family.

Its subcellular location is the membrane. The chain is Cortexin-2 (Ctxn2) from Mus musculus (Mouse).